The sequence spans 118 residues: Peptidyl-prolyl cis-trans isomerase Pin1 (118 aa).

Disordered stretches follow at residues 1–37 (MSSE…ATTR) and 61–84 (LASR…GRGQ). Positions 3 to 118 (SEKVRASHIL…SGVHIIKRTG (116 aa)) constitute a PpiC domain. The span at 12 to 22 (LIKHQGSRRKS) shows a compositional bias: basic residues.

Belongs to the PpiC/parvulin rotamase family. The N-terminus is blocked. In terms of tissue distribution, expressed in roots, stems, leaves, flowers and seedlings.

It is found in the cytoplasm. Its subcellular location is the nucleus. The enzyme catalyses [protein]-peptidylproline (omega=180) = [protein]-peptidylproline (omega=0). Its activity is regulated as follows. Inhibited in vitro by juglone. Prolyl cis/trans isomerase with specificity for phospho-Ser-Pro bonds. This chain is Peptidyl-prolyl cis-trans isomerase Pin1 (PARV12.8), found in Digitalis lanata (Grecian foxglove).